Here is a 61-residue protein sequence, read N- to C-terminus: Small ribosomal subunit protein uS14 (61 aa).

Zn(2+) is bound by residues Cys24, Cys27, Cys40, and Cys43.

It belongs to the universal ribosomal protein uS14 family. Zinc-binding uS14 subfamily. Part of the 30S ribosomal subunit. Contacts proteins S3 and S10. The cofactor is Zn(2+).

Its function is as follows. Binds 16S rRNA, required for the assembly of 30S particles and may also be responsible for determining the conformation of the 16S rRNA at the A site. In Lachnospira eligens (strain ATCC 27750 / DSM 3376 / VPI C15-48 / C15-B4) (Eubacterium eligens), this protein is Small ribosomal subunit protein uS14.